A 512-amino-acid polypeptide reads, in one-letter code: Dihydroniloticin synthase CYP71CD2 (512 aa).

Residues 1-21 (MNLQLDYFSITSFLVFLVVLF) form a helical membrane-spanning segment. Asn436 is a heme binding site.

The protein belongs to the cytochrome P450 family. Heme serves as cofactor. Mainly expressed in petioles and roots, and, to a lower extent, in leaves.

The protein localises to the membrane. It carries out the reaction tirucalla-7,24-dien-3beta-ol + 2 reduced [NADPH--hemoprotein reductase] + 2 O2 = dihydroniloticin + 2 oxidized [NADPH--hemoprotein reductase] + 2 H2O + 2 H(+). It functions in the pathway secondary metabolite biosynthesis; terpenoid biosynthesis. Monooxygenase involved in the biosynthesis of limonoids triterpene natural products such as azadirachtin, an antifeedant widely used as bioinsecticide, and possessing many medicinal applications including anti-tumoral, anti-malarial, anti-rheumatic, antibacterial, anti-inflammatory, anti-pyretic and diuretic effects. Catalyzes the conversion of tirucalladienol to dihydroniloticin. This is Dihydroniloticin synthase CYP71CD2 from Melia azedarach (Chinaberry tree).